A 324-amino-acid polypeptide reads, in one-letter code: Acetyl-coenzyme A carboxylase carboxyl transferase subunit alpha (324 aa).

The region spanning 37 to 291 is the CoA carboxyltransferase C-terminal domain; that stretch reads KLDKRLDRLK…QEYVLQEWLK (255 aa).

This sequence belongs to the AccA family. As to quaternary structure, acetyl-CoA carboxylase is a heterohexamer composed of biotin carboxyl carrier protein (AccB), biotin carboxylase (AccC) and two subunits each of ACCase subunit alpha (AccA) and ACCase subunit beta (AccD).

The protein localises to the cytoplasm. It catalyses the reaction N(6)-carboxybiotinyl-L-lysyl-[protein] + acetyl-CoA = N(6)-biotinyl-L-lysyl-[protein] + malonyl-CoA. Its pathway is lipid metabolism; malonyl-CoA biosynthesis; malonyl-CoA from acetyl-CoA: step 1/1. Component of the acetyl coenzyme A carboxylase (ACC) complex. First, biotin carboxylase catalyzes the carboxylation of biotin on its carrier protein (BCCP) and then the CO(2) group is transferred by the carboxyltransferase to acetyl-CoA to form malonyl-CoA. This Chlamydia trachomatis serovar D (strain ATCC VR-885 / DSM 19411 / UW-3/Cx) protein is Acetyl-coenzyme A carboxylase carboxyl transferase subunit alpha.